The following is a 334-amino-acid chain: Trans-1,2-dihydrobenzene-1,2-diol dehydrogenase (334 aa).

Belongs to the Gfo/Idh/MocA family. In terms of assembly, homodimer.

It carries out the reaction (1R,2R)-1,2-dihydrobenzene-1,2-diol + NADP(+) = catechol + NADPH + H(+). The enzyme catalyses D-xylose + NADP(+) = D-xylono-1,5-lactone + NADPH + H(+). This is Trans-1,2-dihydrobenzene-1,2-diol dehydrogenase (dhdh) from Danio rerio (Zebrafish).